A 363-amino-acid chain; its full sequence is Dual-specificity RNA methyltransferase RlmN (363 aa).

Glu102 (proton acceptor) is an active-site residue. One can recognise a Radical SAM core domain in the interval 108 to 349; that stretch reads EKKRATLCVS…KNRGQDIGAA (242 aa). Cys115 and Cys350 are oxidised to a cystine. Cys122, Cys126, and Cys129 together coordinate [4Fe-4S] cluster. Residues 174 to 175, Ser206, 228 to 230, and Asn307 contribute to the S-adenosyl-L-methionine site; these read GE and SLH. Cys350 serves as the catalytic S-methylcysteine intermediate.

The protein belongs to the radical SAM superfamily. RlmN family. Requires [4Fe-4S] cluster as cofactor.

It is found in the cytoplasm. It catalyses the reaction adenosine(2503) in 23S rRNA + 2 reduced [2Fe-2S]-[ferredoxin] + 2 S-adenosyl-L-methionine = 2-methyladenosine(2503) in 23S rRNA + 5'-deoxyadenosine + L-methionine + 2 oxidized [2Fe-2S]-[ferredoxin] + S-adenosyl-L-homocysteine. The enzyme catalyses adenosine(37) in tRNA + 2 reduced [2Fe-2S]-[ferredoxin] + 2 S-adenosyl-L-methionine = 2-methyladenosine(37) in tRNA + 5'-deoxyadenosine + L-methionine + 2 oxidized [2Fe-2S]-[ferredoxin] + S-adenosyl-L-homocysteine. In terms of biological role, specifically methylates position 2 of adenine 2503 in 23S rRNA and position 2 of adenine 37 in tRNAs. m2A2503 modification seems to play a crucial role in the proofreading step occurring at the peptidyl transferase center and thus would serve to optimize ribosomal fidelity. This chain is Dual-specificity RNA methyltransferase RlmN, found in Buchnera aphidicola subsp. Schizaphis graminum (strain Sg).